Consider the following 171-residue polypeptide: Der GTPase-activating protein YihI (171 aa).

Disordered regions lie at residues 1-99 (MKKP…QAEL) and 145-171 (LSYD…RGGN). Over residues 20–30 (TREELNQEARD) the composition is skewed to basic and acidic residues. Positions 31 to 40 (RKRLKKHRGH) are enriched in basic residues. The segment covering 147–160 (YDDDEEDDEEDEKQ) has biased composition (acidic residues).

It belongs to the YihI family. As to quaternary structure, interacts with Der.

A GTPase-activating protein (GAP) that modifies Der/EngA GTPase function. May play a role in ribosome biogenesis. The sequence is that of Der GTPase-activating protein YihI from Salmonella agona (strain SL483).